Consider the following 117-residue polypeptide: Big defensin (117 aa).

The signal sequence occupies residues 1–23; sequence MKGNIGIAVFYMLLLLLPTDSIG. Residues 26–36 constitute a propeptide that is removed on maturation; that stretch reads MEEEQEKLFRQ. 3 disulfide bridges follow: Cys83–Cys113, Cys90–Cys108, and Cys94–Cys114.

The protein belongs to the big defensin family. Interacts with intracellular coagulation inhibitor 1/LICI-1. As to expression, expressed in all tissues examined, including hemocytes, heart, hepatopancreas, stomach, intestine and skeletal muscle.

The protein resides in the secreted. Significantly inhibits the growth of Gram-negative and Gram-positive bacteria and fungi in vitro. The sequence is that of Big defensin from Tachypleus tridentatus (Japanese horseshoe crab).